The primary structure comprises 86 residues: Small ribosomal subunit protein uS15 (86 aa).

The protein belongs to the universal ribosomal protein uS15 family. In terms of assembly, part of the 30S ribosomal subunit. Forms a bridge to the 50S subunit in the 70S ribosome, contacting the 23S rRNA.

One of the primary rRNA binding proteins, it binds directly to 16S rRNA where it helps nucleate assembly of the platform of the 30S subunit by binding and bridging several RNA helices of the 16S rRNA. In terms of biological role, forms an intersubunit bridge (bridge B4) with the 23S rRNA of the 50S subunit in the ribosome. This is Small ribosomal subunit protein uS15 from Endomicrobium trichonymphae.